The sequence spans 100 residues: Large ribosomal subunit protein bL21 (100 aa).

Belongs to the bacterial ribosomal protein bL21 family. Part of the 50S ribosomal subunit. Contacts protein L20.

This protein binds to 23S rRNA in the presence of protein L20. This chain is Large ribosomal subunit protein bL21, found in Wolbachia pipientis wMel.